Consider the following 363-residue polypeptide: 5-formaminoimidazole-4-carboxamide-1-(beta)-D-ribofuranosyl 5'-monophosphate synthetase (363 aa).

The 5-amino-1-(5-phospho-beta-D-ribosyl)imidazole-4-carboxamide site is built by histidine 29 and serine 96. In terms of domain architecture, ATP-grasp spans 118–354; sequence RDILRWEAER…IALEIKNAIK (237 aa). ATP contacts are provided by residues 148–210 and glutamate 232; that span reads PSEI…CNYC. Residue asparagine 260 participates in 5-amino-1-(5-phospho-beta-D-ribosyl)imidazole-4-carboxamide binding. 2 residues coordinate Mg(2+): glutamine 299 and glutamate 312.

This sequence belongs to the phosphohexose mutase family. Mg(2+) is required as a cofactor. Mn(2+) serves as cofactor.

It catalyses the reaction 5-amino-1-(5-phospho-beta-D-ribosyl)imidazole-4-carboxamide + formate + ATP = 5-formamido-1-(5-phospho-D-ribosyl)imidazole-4-carboxamide + ADP + phosphate. Its pathway is purine metabolism; IMP biosynthesis via de novo pathway; 5-formamido-1-(5-phospho-D-ribosyl)imidazole-4-carboxamide from 5-amino-1-(5-phospho-D-ribosyl)imidazole-4-carboxamide (formate route): step 1/1. Functionally, catalyzes the ATP- and formate-dependent formylation of 5-aminoimidazole-4-carboxamide-1-beta-d-ribofuranosyl 5'-monophosphate (AICAR) to 5-formaminoimidazole-4-carboxamide-1-beta-d-ribofuranosyl 5'-monophosphate (FAICAR) in the absence of folates. This is 5-formaminoimidazole-4-carboxamide-1-(beta)-D-ribofuranosyl 5'-monophosphate synthetase from Methanobrevibacter smithii (strain ATCC 35061 / DSM 861 / OCM 144 / PS).